The primary structure comprises 59 residues: MKILSVLLLALIICSIIDWSEGQFTQESCTASNQCWSICKRLHNTNRGKCMNKKCRCYS.

Positions 1-22 (MKILSVLLLALIICSIIDWSEG) are cleaved as a signal peptide. Pyrrolidone carboxylic acid is present on Gln-23. 3 disulfides stabilise this stretch: Cys-29/Cys-50, Cys-35/Cys-55, and Cys-39/Cys-57. An interaction with Ca(2+)-activated K(+) channels region spans residues 48 to 55 (GKCMNKKC).

Belongs to the short scorpion toxin superfamily. Potassium channel inhibitor family. Alpha-KTx 01 subfamily. Expressed by the venom gland.

The protein resides in the secreted. In terms of biological role, blocks calcium-activated potassium channels (Kd=43 nM on KCa1.1/KCNMA1). Has a potent presynaptic facilitatory action, with less effect on direct muscle stimulation. The polypeptide is Potassium channel toxin alpha-KTx 1.2 (Leiurus hebraeus (Hebrew deathstalker scorpion)).